The following is a 333-amino-acid chain: BRISC and BRCA1-A complex member 1 (333 aa).

Residue Met1 is modified to N-acetylmethionine. Positions 1 to 85 (MEVAEANSPT…PWQVPASASE (85 aa)) are disordered. Ser8 carries the phosphoserine modification. Residues 10–24 (TEEEEEEEEEGEETI) show a composition bias toward acidic residues. 2 positions are modified to phosphoserine: Ser33 and Ser53. Residues 58–67 (EAATADGGAA) are compositionally biased toward low complexity. Residues 99 to 302 (VIICLDLSEE…LELHNCMAKL (204 aa)) form a VWFA-like region.

The protein belongs to the BABAM1 family. As to quaternary structure, component of the ARISC complex, at least composed of UIMC1/RAP80, ABRAXAS1, BRCC3/BRCC36, BABAM2 and BABAM1/NBA1. Component of the BRCA1-A complex, at least composed of BRCA1, BARD1, UIMC1/RAP80, ABRAXAS1, BRCC3/BRCC36, BABAM2 and BABAM1/NBA1. In the BRCA1-A complex, interacts directly with ABRAXAS1 and BABAM2. Component of the BRISC complex, at least composed of ABRAXAS2, BRCC3/BRCC36, BABAM2 and BABAM1/NBA1. Identified in a complex with SHMT2 and the other subunits of the BRISC complex.

It is found in the cytoplasm. The protein localises to the nucleus. Component of the BRCA1-A complex, a complex that specifically recognizes 'Lys-63'-linked ubiquitinated histones H2A and H2AX at DNA lesions sites, leading to target the BRCA1-BARD1 heterodimer to sites of DNA damage at double-strand breaks (DSBs). The BRCA1-A complex also possesses deubiquitinase activity that specifically removes 'Lys-63'-linked ubiquitin on histones H2A and H2AX. In the BRCA1-A complex, it is required for the complex integrity and its localization at DSBs. Component of the BRISC complex, a multiprotein complex that specifically cleaves 'Lys-63'-linked ubiquitin in various substrates. In these 2 complexes, it is probably required to maintain the stability of BABAM2 and help the 'Lys-63'-linked deubiquitinase activity mediated by BRCC3/BRCC36 component. The BRISC complex is required for normal mitotic spindle assembly and microtubule attachment to kinetochores via its role in deubiquitinating NUMA1. Plays a role in interferon signaling via its role in the deubiquitination of the interferon receptor IFNAR1; deubiquitination increases IFNAR1 activity by enhancing its stability and cell surface expression. Down-regulates the response to bacterial lipopolysaccharide (LPS) via its role in IFNAR1 deubiquitination. The polypeptide is BRISC and BRCA1-A complex member 1 (Babam1) (Mus musculus (Mouse)).